We begin with the raw amino-acid sequence, 241 residues long: Diacetyl reductase [(S)-acetoin forming] (241 aa).

6-30 provides a ligand contact to NAD(+); the sequence is LVTGAGQGIGKAIALRLVKDGFAVA. Position 139 (S139) interacts with substrate. Residue Y152 is the Proton acceptor of the active site. The active site involves K156.

This sequence belongs to the short-chain dehydrogenases/reductases (SDR) family. As to quaternary structure, homotetramer.

It catalyses the reaction (S)-acetoin + NAD(+) = diacetyl + NADH + H(+). Catalyzes the irreversible reduction of 2,3-butanediol to (S)-acetoin in the presence of NADH. The chain is Diacetyl reductase [(S)-acetoin forming] (budC) from Raoultella terrigena (Klebsiella terrigena).